The primary structure comprises 459 residues: ATP synthase subunit beta (459 aa).

149–156 (GGAGVGKT) contributes to the ATP binding site.

The protein belongs to the ATPase alpha/beta chains family. In terms of assembly, F-type ATPases have 2 components, CF(1) - the catalytic core - and CF(0) - the membrane proton channel. CF(1) has five subunits: alpha(3), beta(3), gamma(1), delta(1), epsilon(1). CF(0) has three main subunits: a(1), b(2) and c(9-12). The alpha and beta chains form an alternating ring which encloses part of the gamma chain. CF(1) is attached to CF(0) by a central stalk formed by the gamma and epsilon chains, while a peripheral stalk is formed by the delta and b chains.

The protein localises to the cell inner membrane. It carries out the reaction ATP + H2O + 4 H(+)(in) = ADP + phosphate + 5 H(+)(out). In terms of biological role, produces ATP from ADP in the presence of a proton gradient across the membrane. The catalytic sites are hosted primarily by the beta subunits. This is ATP synthase subunit beta from Pseudomonas syringae pv. tomato (strain ATCC BAA-871 / DC3000).